The following is a 209-amino-acid chain: Geminin (209 aa).

Residues 1–79 form a disordered region; it reads MNPSMKQKQE…PESSENKNLG (79 aa). The span at 7 to 16 shows a compositional bias: basic and acidic residues; sequence QKQEEIKENI. Lys-27 carries the post-translational modification N6-acetyllysine. 5 positions are modified to phosphoserine: Ser-34, Ser-36, Ser-49, Ser-63, and Ser-64. The segment at 82–161 is necessary and sufficient for interaction with IDAS and CDT1; the sequence is TQESFDLMIK…AELIERLNGE (80 aa). Residues 94–144 adopt a coiled-coil conformation; that stretch reads PSSQYWKEVAEKRRKALYEALKENEKLHKEIEQKDNEIARLKKENKELAEV. Residues 164–209 form a disordered region; sequence DNFESLDNQEFDSEEETVEDSLVEDSEIGTCAEGTVSSSTDAKPCI. The homeodomain binding stretch occupies residues 170–190; it reads DNQEFDSEEETVEDSLVEDSE. Residues 170 to 190 show a composition bias toward acidic residues; the sequence is DNQEFDSEEETVEDSLVEDSE. Phosphoserine; by CK2 is present on Ser-184. The segment covering 198–209 has biased composition (polar residues); sequence TVSSSTDAKPCI.

The protein belongs to the geminin family. Homotetramer. Interacts with CDT1; this inhibits binding of the MCM complex to origins of replication. The complex with CDT1 exists in two forms, a 'permissive' heterotrimer and an 'inhibitory' heterohexamer. Interacts (via coiled-coil domain) with IDAS (via coiled-coil domain); this targets GMNN to the nucleus. The heterodimer formed by GMNN and MCIDAS has much lower affinity for CDT1 than the GMNN homodimer. Interacts with a subset of Hox proteins, affinity increasing from anterior to posterior types, the strongest interaction being with HOXB1, HOXC9 and HOXD10. Interacts with LRWD1 from G1/S to mitosis. In terms of processing, phosphorylated during mitosis. Phosphorylation at Ser-184 by CK2 results in enhanced binding to Hox proteins and more potent inhibitory effect on Hox transcriptional activity.

It is found in the cytoplasm. Its subcellular location is the nucleus. Functionally, inhibits DNA replication by preventing the incorporation of MCM complex into pre-replication complex (pre-RC). It is degraded during the mitotic phase of the cell cycle. Its destruction at the metaphase-anaphase transition permits replication in the succeeding cell cycle. Inhibits histone acetyltransferase activity of KAT7/HBO1 in a CDT1-dependent manner, inhibiting histone H4 acetylation and DNA replication licensing. Inhibits the transcriptional activity of a subset of Hox proteins, enrolling them in cell proliferative control. The polypeptide is Geminin (GMNN) (Homo sapiens (Human)).